The following is a 77-amino-acid chain: Tachyplesin-2 (77 aa).

The N-terminal stretch at 1-23 (MKKLVIALCLMMVLAVMVEEAEA) is a signal peptide. 2 disulfides stabilise this stretch: Cys26-Cys39 and Cys30-Cys35. Arginine amide is present on Arg40. Positions 41-77 (GKRNEVRQYRDRGYDVRAIPDETFFTRQDEDEDDDEE) are excised as a propeptide.

Belongs to the tachyplesin/polyphemusin family. Hemocytes.

The protein localises to the secreted. Significantly inhibits the growth of Gram-negative and Gram-positive bacteria. The sequence is that of Tachyplesin-2 from Tachypleus tridentatus (Japanese horseshoe crab).